A 610-amino-acid polypeptide reads, in one-letter code: ATP-dependent zinc metalloprotease FtsH (610 aa).

Topologically, residues 1-5 (MNRSN) are cytoplasmic. The helical transmembrane segment at 6 to 26 (IWNLLFTILIIVTLFWLARFF) threads the bilayer. Over 27–107 (YVENSPVSKL…SGERSGSSSF (81 aa)) the chain is Periplasmic. Residues 108 to 128 (WINVLGTLIPTILFIVVWLFI) traverse the membrane as a helical segment. The Cytoplasmic portion of the chain corresponds to 129–610 (MRSLSGRNNQ…LSEEFEKVVE (482 aa)). Residues G164, 204–208 (GTGKT), L209, H343, and E371 contribute to the ATP site. H423 serves as a coordination point for Zn(2+). Residue E424 is part of the active site. 2 residues coordinate Zn(2+): H427 and D500.

In the central section; belongs to the AAA ATPase family. This sequence in the C-terminal section; belongs to the peptidase M41 family. The isolated ADP-bound cytosolic domain forms a 6-fold symmetric protease disk and a 2-fold symmetric AAA ATPase ring. In the absence of nucleotide the AAA ATPase ring also forms symmetric hexamers. The cofactor is Zn(2+).

The protein localises to the cell inner membrane. Its function is as follows. Acts as a processive, ATP-dependent zinc metallopeptidase for both cytoplasmic and membrane proteins. Plays a role in the quality control of integral membrane proteins. In Thermotoga maritima (strain ATCC 43589 / DSM 3109 / JCM 10099 / NBRC 100826 / MSB8), this protein is ATP-dependent zinc metalloprotease FtsH.